A 917-amino-acid chain; its full sequence is Serine/arginine repetitive matrix protein 1 (917 aa).

At Met-1 the chain carries N-acetylmethionine. A necessary for DNA and RNA-binding region spans residues 1-151 (MDAGFFRGTS…ASMKKQDEDK (151 aa)). Residues 1–156 (MDAGFFRGTS…QDEDKDKRDK (156 aa)) are necessary for mRNA 3'-end cleavage and cytoplasmic accumulation. Position 7 is a citrulline (Arg-7). Residues 27–126 (QLKFAECLEK…AGIPSAFLEL (100 aa)) enclose the PWI domain. Lys-127 is covalently cross-linked (Glycyl lysine isopeptide (Lys-Gly) (interchain with G-Cter in SUMO2)). A compositionally biased stretch (basic and acidic residues) spans 139-170 (EKLASMKKQDEDKDKRDKEEKESSREKRERSR). The disordered stretch occupies residues 139–917 (EKLASMKKQD…MRKAQVSPQS (779 aa)). Position 140 is an N6-acetyllysine (Lys-140). Basic residues predominate over residues 171-207 (SPRRRKSRSPSPRRRSSPVRRERKRSHSRSPRHRTKS). Residues 214–234 (PEKKEKTPELPEPSVKVKEPS) show a composition bias toward basic and acidic residues. The residue at position 220 (Thr-220) is a Phosphothreonine. Ser-227 carries the phosphoserine modification. Lys-231 is covalently cross-linked (Glycyl lysine isopeptide (Lys-Gly) (interchain with G-Cter in SUMO1); alternate). Lys-231 participates in a covalent cross-link: Glycyl lysine isopeptide (Lys-Gly) (interchain with G-Cter in SUMO2); alternate. Phosphoserine is present on residues Ser-234 and Ser-240. The residue at position 241 (Thr-241) is a Phosphothreonine. Residues 246–275 (KVPKPEPIPEPKEPSPEKNSKKEKEKEKTR) show a composition bias toward basic and acidic residues. Residue Lys-249 forms a Glycyl lysine isopeptide (Lys-Gly) (interchain with G-Cter in SUMO2) linkage. Ser-260 is modified (phosphoserine). Composition is skewed to basic residues over residues 276-329 (PRSR…RTPP) and 336-351 (PRHRRSRSPVRRRRRS). Residues 300-702 (RRHRSRSRSY…NKRHSPSPRP (403 aa)) form a necessary for speckles and matrix localization region. Residues 352–368 (SASLSGSSSSSSSSRSR) show a composition bias toward low complexity. 4 positions are modified to phosphoserine: Ser-389, Ser-391, Ser-393, and Ser-402. Thr-406 carries the phosphothreonine modification. Position 414 is a phosphoserine (Ser-414). The residue at position 416 (Thr-416) is a Phosphothreonine. 4 positions are modified to phosphoserine: Ser-420, Ser-429, Ser-431, and Ser-436. Residues 428–438 (VSVSPGRTSGK) are compositionally biased toward polar residues. Lys-447 is covalently cross-linked (Glycyl lysine isopeptide (Lys-Gly) (interchain with G-Cter in SUMO2)). 2 positions are modified to phosphoserine: Ser-450 and Ser-452. Lys-459 is covalently cross-linked (Glycyl lysine isopeptide (Lys-Gly) (interchain with G-Cter in SUMO2)). A phosphoserine mark is found at Ser-463 and Ser-465. Lys-472 is covalently cross-linked (Glycyl lysine isopeptide (Lys-Gly) (interchain with G-Cter in SUMO2)). The residue at position 478 (Ser-478) is a Phosphoserine. The span at 478-501 (SVQQRRQYRRQNQQSSSDSGSSSS) shows a compositional bias: low complexity. Over residues 503-518 (EDERPKRSHVKNGEVG) the composition is skewed to basic and acidic residues. Ser-524, Ser-526, Ser-528, Ser-530, Ser-532, Ser-563, and Ser-565 each carry phosphoserine. Residues 557–574 (SGRRRRSPSPPPTRRRRS) are compositionally biased toward basic residues. Residue Thr-569 is modified to Phosphothreonine. Ser-574 and Ser-576 each carry phosphoserine. Residues 581-606 (PRRRRTPTPPPRRRTPSPPPRRRSPS) show a composition bias toward basic residues. Phosphothreonine is present on residues Thr-586, Thr-588, and Thr-595. Residue Ser-597 is modified to Phosphoserine. Low complexity predominate over residues 607-619 (PRRYSPPIQRRYS). A Phosphotyrosine modification is found at Tyr-610. Phosphoserine occurs at positions 611, 619, and 621. A Phosphothreonine modification is found at Thr-628. Ser-630, Ser-640, Ser-642, Ser-650, and Ser-652 each carry phosphoserine. Positions 635–650 (PKRRASPSPPPKRRVS) are enriched in basic residues. Basic residues predominate over residues 663-677 (TKRRSPSLSSKHRKG). Positions 699–713 (SPRPRAPQTSSPPPV) are enriched in pro residues. Phosphoserine occurs at positions 708, 709, 718, 720, 726, and 728. Composition is skewed to low complexity over residues 714-732 (RRGASSSPQRRQSPSPSTR), 749-772 (AASPSPQSVRRVSSSRSVSGSPEP), and 782-799 (SPVQSQSPSTNWSPAVPV). At Thr-731 the chain carries Phosphothreonine. Phosphoserine occurs at positions 751, 753, 761, 765, 767, 769, 782, 786, 788, and 790. Residue Thr-791 is modified to Phosphothreonine. Phosphoserine is present on residues Ser-794 and Ser-804. Thr-806 carries the phosphothreonine modification. Ser-808, Ser-810, and Ser-815 each carry phosphoserine. A compositionally biased stretch (basic residues) spans 822–847 (KKKKKKKDKKHKKDKKHKKHKKHKKE). The segment covering 850-879 (VAAAAAAAVTPAAIAAATTTLAQEEPVAAP) has biased composition (low complexity). Lys-882 is covalently cross-linked (Glycyl lysine isopeptide (Lys-Gly) (interchain with G-Cter in SUMO2)). At Thr-885 the chain carries Phosphothreonine. At Ser-887 the chain carries Phosphoserine. Positions 895 to 905 (DLEKHLREKAL) are enriched in basic and acidic residues. Ser-914 bears the Phosphoserine mark.

The protein belongs to the splicing factor SR family. Identified in the spliceosome C complex. Found in a pre-mRNA splicing complex with SFRS4, SFRS5, SNRP70, SNRPA1, SRRM1 and SRRM2. Component of the minor spliceosome, which splices U12-type introns. Found in a pre-mRNA exonic splicing enhancer (ESE) complex with SNRP70, SNRPA1, SRRM1 and TRA2B/SFRS10. Found in a mRNA splicing-dependent exon junction complex (EJC) with DEK, PRPF8, NCBP1, RBM8A, RNPS1, SRRM1 and ALYREF/THOC4. Interacts with DDX39B, CPSF1, RBM8A, RNPS1, and ALYREF/THOC4. Seems to be a compound of RNA export complexes that are released from speckles in a ATP-dependent manner. Phosphorylated on multiple serine and threonine residues by DYRK3 during the G2-to-M transition, after the nuclear-envelope breakdown. Phosphorylation by DYRK3 promotes disassembly of nuclear speckles. In terms of processing, citrullinated by PADI4.

Its function is as follows. Part of pre- and post-splicing multiprotein mRNP complexes. As a component of the minor spliceosome, involved in the splicing of U12-type introns in pre-mRNAs. Involved in numerous pre-mRNA processing events. Promotes constitutive and exonic splicing enhancer (ESE)-dependent splicing activation by bridging together sequence-specific (SR family proteins, SFRS4, SFRS5 and TRA2B/SFRS10) and basal snRNP (SNRP70 and SNRPA1) factors of the spliceosome. Stimulates mRNA 3'-end cleavage independently of the formation of an exon junction complex. Binds both pre-mRNA and spliced mRNA 20-25 nt upstream of exon-exon junctions. Binds RNA and DNA with low sequence specificity and has similar preference for either double- or single-stranded nucleic acid substrates. This chain is Serine/arginine repetitive matrix protein 1 (SRRM1), found in Pongo abelii (Sumatran orangutan).